A 218-amino-acid chain; its full sequence is Adenylate kinase (218 aa).

10 to 15 (GAGKGT) lines the ATP pocket. The tract at residues 30–59 (STGDMLRAAVKAGSPLGLKVKDIMTSGGLV) is NMP. Residues Thr31, Arg36, 57-59 (GLV), 85-88 (GFPR), and Gln92 contribute to the AMP site. The LID stretch occupies residues 122-159 (GRRVHEASGRVYHVKHNAPKTEGVDDETGEPLVQRDDD). ATP is bound by residues Arg123 and 132–133 (VY). AMP-binding residues include Arg156 and Arg167. Residue Gly203 participates in ATP binding.

This sequence belongs to the adenylate kinase family. As to quaternary structure, monomer.

It is found in the cytoplasm. The enzyme catalyses AMP + ATP = 2 ADP. Its pathway is purine metabolism; AMP biosynthesis via salvage pathway; AMP from ADP: step 1/1. Its function is as follows. Catalyzes the reversible transfer of the terminal phosphate group between ATP and AMP. Plays an important role in cellular energy homeostasis and in adenine nucleotide metabolism. This Saccharophagus degradans (strain 2-40 / ATCC 43961 / DSM 17024) protein is Adenylate kinase.